The sequence spans 101 residues: Urease subunit beta (101 aa).

The protein belongs to the urease beta subunit family. As to quaternary structure, heterotrimer of UreA (gamma), UreB (beta) and UreC (alpha) subunits. Three heterotrimers associate to form the active enzyme.

Its subcellular location is the cytoplasm. It catalyses the reaction urea + 2 H2O + H(+) = hydrogencarbonate + 2 NH4(+). The protein operates within nitrogen metabolism; urea degradation; CO(2) and NH(3) from urea (urease route): step 1/1. This Paraburkholderia xenovorans (strain LB400) protein is Urease subunit beta.